We begin with the raw amino-acid sequence, 552 residues long: Steroid transmembrane transporter SLC22A24 (552 aa).

12 consecutive transmembrane segments (helical) span residues 16-36 (FQIL…THIL), 144-164 (LKSV…LMFG), 175-197 (IYTW…PTFV), 201-220 (IFRF…AFIL), 232-252 (IGIT…GGLA), 255-275 (IRDW…LSLL), 349-369 (IICF…GLIL), 371-391 (LQDL…ITFI), 407-427 (INQS…TFLS), 435-455 (VVLA…FFVH), 474-494 (VFSR…VYSP), and 496-516 (LPWV…FCLP).

This sequence belongs to the major facilitator (TC 2.A.1) superfamily. Organic cation transporter (TC 2.A.1.19) family.

It is found in the cell membrane. The catalysed reaction is estrone 3-sulfate(out) + glutarate(in) = estrone 3-sulfate(in) + glutarate(out). It carries out the reaction 17beta-estradiol 17-O-(beta-D-glucuronate)(out) + glutarate(in) = 17beta-estradiol 17-O-(beta-D-glucuronate)(in) + glutarate(out). It catalyses the reaction taurocholate(out) + glutarate(in) = taurocholate(in) + glutarate(out). The enzyme catalyses 5alpha-androstane-3alpha,17beta-diol 3-O-(beta-D-glucuronate)(out) + glutarate(in) = 5alpha-androstane-3alpha,17beta-diol 3-O-(beta-D-glucuronate)(in) + glutarate(out). The catalysed reaction is glycocholate(out) + glutarate(in) = glycocholate(in) + glutarate(out). It carries out the reaction dehydroepiandrosterone 3-sulfate(out) + glutarate(in) = dehydroepiandrosterone 3-sulfate(in) + glutarate(out). It catalyses the reaction glutarate(in) + succinate(out) = glutarate(out) + succinate(in). Functionally, renal transmembrane organic anion/dicarboxylate exchanger that participates in the reabsorption of conjugated steroids, as well as bile acids, driven by an outward gradient of dicarboxylates such as glutarate or succinate. Transports androstanediol glucuronide (5alpha-androstane-3alpha,17beta-diol 3-O-(beta-D-glucuronate)), estrone 3-sulfate, and estradiol-17-glucuronide (17beta-estradiol 17-O-(beta-D-glucuronate)), and taurocholate. The sequence is that of Steroid transmembrane transporter SLC22A24 from Oryctolagus cuniculus (Rabbit).